Consider the following 229-residue polypeptide: Large ribosomal subunit protein uL3 (229 aa).

Glutamine 151 is subject to N5-methylglutamine.

It belongs to the universal ribosomal protein uL3 family. In terms of assembly, part of the 50S ribosomal subunit. Forms a cluster with proteins L14 and L19. In terms of processing, methylated by PrmB.

Its function is as follows. One of the primary rRNA binding proteins, it binds directly near the 3'-end of the 23S rRNA, where it nucleates assembly of the 50S subunit. The protein is Large ribosomal subunit protein uL3 of Paramagnetospirillum magneticum (strain ATCC 700264 / AMB-1) (Magnetospirillum magneticum).